Consider the following 163-residue polypeptide: Crossover junction endodeoxyribonuclease RuvC (163 aa).

Active-site residues include D7, E67, and D140. The Mg(2+) site is built by D7, E67, and D140.

It belongs to the RuvC family. Homodimer which binds Holliday junction (HJ) DNA. The HJ becomes 2-fold symmetrical on binding to RuvC with unstacked arms; it has a different conformation from HJ DNA in complex with RuvA. In the full resolvosome a probable DNA-RuvA(4)-RuvB(12)-RuvC(2) complex forms which resolves the HJ. Mg(2+) is required as a cofactor.

It localises to the cytoplasm. The catalysed reaction is Endonucleolytic cleavage at a junction such as a reciprocal single-stranded crossover between two homologous DNA duplexes (Holliday junction).. Its function is as follows. The RuvA-RuvB-RuvC complex processes Holliday junction (HJ) DNA during genetic recombination and DNA repair. Endonuclease that resolves HJ intermediates. Cleaves cruciform DNA by making single-stranded nicks across the HJ at symmetrical positions within the homologous arms, yielding a 5'-phosphate and a 3'-hydroxyl group; requires a central core of homology in the junction. The consensus cleavage sequence is 5'-(A/T)TT(C/G)-3'. Cleavage occurs on the 3'-side of the TT dinucleotide at the point of strand exchange. HJ branch migration catalyzed by RuvA-RuvB allows RuvC to scan DNA until it finds its consensus sequence, where it cleaves and resolves the cruciform DNA. The chain is Crossover junction endodeoxyribonuclease RuvC from Petrotoga mobilis (strain DSM 10674 / SJ95).